The sequence spans 592 residues: Polyadenylate-binding protein, cytoplasmic and nuclear (592 aa).

Over residues 1–10 (MSDITEKTAE) the composition is skewed to basic and acidic residues. Residues 1 to 43 (MSDITEKTAEQLENLQINDDQQPAQSASAPSTSASESEASSVS) are disordered. Polar residues predominate over residues 11–20 (QLENLQINDD). Residues 21–43 (QQPAQSASAPSTSASESEASSVS) show a composition bias toward low complexity. RRM domains are found at residues 50 to 128 (ASLY…WSER), 138 to 215 (GNIF…MHVP), 231 to 308 (TNIY…RAQK), and 334 to 411 (VNLF…IAQR). One can recognise a PABC domain in the interval 507–586 (NQFPRHQQQH…ALAAYENFKK (80 aa)).

It belongs to the polyadenylate-binding protein type-1 family.

The protein localises to the cytoplasm. Its subcellular location is the nucleus. In terms of biological role, binds the poly(A) tail of mRNA. Appears to be an important mediator of the multiple roles of the poly(A) tail in mRNA biogenesis, stability and translation. In the nucleus, involved in both mRNA cleavage and polyadenylation. Is also required for efficient mRNA export to the cytoplasm. Acts in concert with a poly(A)-specific nuclease (PAN) to affect poly(A) tail shortening, which may occur concomitantly with either nucleocytoplasmic mRNA transport or translational initiation. In the cytoplasm, stimulates translation initiation and regulates mRNA decay through translation termination-coupled poly(A) shortening, probably mediated by PAN. This chain is Polyadenylate-binding protein, cytoplasmic and nuclear (PAB1), found in Kluyveromyces lactis (strain ATCC 8585 / CBS 2359 / DSM 70799 / NBRC 1267 / NRRL Y-1140 / WM37) (Yeast).